A 505-amino-acid polypeptide reads, in one-letter code: NADH-quinone oxidoreductase subunit N 1 (505 aa).

Helical transmembrane passes span 18–38, 45–65, 84–104, 116–136, 138–158, 173–193, 223–243, 271–291, 292–312, 319–339, 345–365, 391–411, 429–449, and 473–493; these read LIPE…EMVL, LIAT…AWDF, YVGQ…SILA, IEFY…AQAN, FVLF…LVSY, LIMG…LYGV, FLAA…IGAF, AGFA…WWLV, QPVL…AALT, LIGL…IASH, VGAV…VFGV, FLAA…PLAG, GLLA…FGWI, and VGAA…LFGV.

It belongs to the complex I subunit 2 family. In terms of assembly, NDH-1 is composed of 14 different subunits. Subunits NuoA, H, J, K, L, M, N constitute the membrane sector of the complex.

It is found in the cell inner membrane. The enzyme catalyses a quinone + NADH + 5 H(+)(in) = a quinol + NAD(+) + 4 H(+)(out). In terms of biological role, NDH-1 shuttles electrons from NADH, via FMN and iron-sulfur (Fe-S) centers, to quinones in the respiratory chain. The immediate electron acceptor for the enzyme in this species is believed to be ubiquinone. Couples the redox reaction to proton translocation (for every two electrons transferred, four hydrogen ions are translocated across the cytoplasmic membrane), and thus conserves the redox energy in a proton gradient. This Opitutus terrae (strain DSM 11246 / JCM 15787 / PB90-1) protein is NADH-quinone oxidoreductase subunit N 1.